Reading from the N-terminus, the 65-residue chain is Large ribosomal subunit protein bL35 (65 aa).

The segment covering 1–10 (MPKMKSKSSA) has biased composition (basic residues). A disordered region spans residues 1–21 (MPKMKSKSSAKMRFSVRAGGT).

The protein belongs to the bacterial ribosomal protein bL35 family.

This is Large ribosomal subunit protein bL35 from Polynucleobacter necessarius subsp. necessarius (strain STIR1).